A 162-amino-acid chain; its full sequence is MSQEEIKDLTLLGNQKTNYNFDYDLNILEAFDNRHQDNDYFIKFNCPEFTSLCPITGQPDFATIYLSYIPDKKCVESKSLKLYLFSYRNHGDFHENCINTIGKDLVDLLQPRYLEVWGKFTPRGGISIDPYYNYGRPNTKYEEMAAYRLMNHDLYPETIDNR.

The active-site Thioimide intermediate is the cysteine 53. Aspartate 60 (proton donor) is an active-site residue. Residues 75 to 77 (VES) and 94 to 95 (HE) each bind substrate.

This sequence belongs to the GTP cyclohydrolase I family. QueF type 1 subfamily.

It localises to the cytoplasm. The enzyme catalyses 7-aminomethyl-7-carbaguanine + 2 NADP(+) = 7-cyano-7-deazaguanine + 2 NADPH + 3 H(+). It participates in tRNA modification; tRNA-queuosine biosynthesis. In terms of biological role, catalyzes the NADPH-dependent reduction of 7-cyano-7-deazaguanine (preQ0) to 7-aminomethyl-7-deazaguanine (preQ1). The polypeptide is NADPH-dependent 7-cyano-7-deazaguanine reductase (Streptococcus mutans serotype c (strain ATCC 700610 / UA159)).